The primary structure comprises 432 residues: Phosphomevalonate kinase (432 aa).

ATP is bound by residues K10 and 142 to 148; that span reads VEKTGLG.

The protein belongs to the GHMP kinase family. Mevalonate kinase subfamily.

The protein resides in the cytoplasm. It carries out the reaction (R)-5-phosphomevalonate + ATP = (R)-5-diphosphomevalonate + ADP. It functions in the pathway isoprenoid biosynthesis; isopentenyl diphosphate biosynthesis via mevalonate pathway; isopentenyl diphosphate from (R)-mevalonate: step 2/3. Its function is as follows. Phosphomevalonate kinase; part of the second module of ergosterol biosynthesis pathway that includes the middle steps of the pathway. ERG8 converts 5-phosphomevalonate to 5-diphosphomevalonate. The second module is carried out in the vacuole and involves the formation of farnesyl diphosphate, which is also an important intermediate in the biosynthesis of ubiquinone, dolichol, heme and prenylated proteins. Activity by the mevalonate kinase ERG12 first converts mevalonate into 5-phosphomevalonate. 5-phosphomevalonate is then further converted to 5-diphosphomevalonate by the phosphomevalonate kinase ERG8. The diphosphomevalonate decarboxylase MVD then produces isopentenyl diphosphate. The isopentenyl-diphosphate delta-isomerase IDI1 then catalyzes the 1,3-allylic rearrangement of the homoallylic substrate isopentenyl (IPP) to its highly electrophilic allylic isomer, dimethylallyl diphosphate (DMAPP). Finally the farnesyl diphosphate synthase ERG20 catalyzes the sequential condensation of isopentenyl pyrophosphate with dimethylallyl pyrophosphate, and then with the resultant geranylpyrophosphate to the ultimate product farnesyl pyrophosphate. The polypeptide is Phosphomevalonate kinase (Candida albicans (strain SC5314 / ATCC MYA-2876) (Yeast)).